Reading from the N-terminus, the 1265-residue chain is Kinesin-like protein Klp98A (1265 aa).

Residues 3–364 (SLKVAVRVRP…LRYANRAKNI (362 aa)) form the Kinesin motor domain. 100–107 (GQTGSGKT) is a binding site for ATP. 3 disordered regions span residues 597–621 (GASP…DPEL), 828–864 (EAES…DVSK), and 884–954 (VSSP…CTPS). 2 coiled-coil regions span residues 619-670 (PELQ…EEMD) and 768-848 (AQFI…LGNK). Polar residues-rich tracts occupy residues 846–857 (GNKSMSTSTSTN), 884–901 (VSSP…SNCS), and 917–927 (SGSSEETSRTC). The span at 933-946 (SGSGSGSVGIGGSG) shows a compositional bias: gly residues. The stretch at 1035–1071 (DLNKAQLDEHIADLQDLQRRYIQMEQEMLQSVQDLEA) forms a coiled coil. The PX domain occupies 1129-1259 (GEHFITIPSF…SFFKKGLFEN (131 aa)).

The protein belongs to the TRAFAC class myosin-kinesin ATPase superfamily. Kinesin family. In terms of assembly, interacts with Atg8a and Rab14.

The protein localises to the early endosome. In terms of biological role, plus end-directed motor protein involved in asymmetric cell division of sensory organ precursor (SOP) cells by playing a role in the asymmetric localization of Sara-expressing endosomes to the pIIa daughter cell but not to the pIIb cell. Targets Sara-expressing endosomes to the central spindle which is symmetrically arranged in early cell division. During late cytokinesis, central spindle asymmetry is generated by enrichment of Patronin on the pIIb side which protects microtubules from depolymerization by Klp10A while unprotected microtubules on the pIIa side are disassembled by Klp10A, leading to the asymmetric delivery of Sara-expressing endosomes to the pIIa daughter cell. Also plays a role in regulation of autophagosome formation, fusion and positioning and is required for normal localization of Rab14. The polypeptide is Kinesin-like protein Klp98A (Drosophila melanogaster (Fruit fly)).